We begin with the raw amino-acid sequence, 59 residues long: UPF0434 protein RHOS4_00640 (59 aa).

It belongs to the UPF0434 family.

The chain is UPF0434 protein RHOS4_00640 from Cereibacter sphaeroides (strain ATCC 17023 / DSM 158 / JCM 6121 / CCUG 31486 / LMG 2827 / NBRC 12203 / NCIMB 8253 / ATH 2.4.1.) (Rhodobacter sphaeroides).